Here is a 387-residue protein sequence, read N- to C-terminus: RNA polymerase II elongation factor ELL3 (387 aa).

Disordered stretches follow at residues 127–148 (LTEG…EGHP) and 186–275 (LSNR…EEVP). Residues 230–239 (SPLQGLSNQD) show a composition bias toward polar residues. At Ser-240 the chain carries Phosphoserine. The segment covering 240–251 (SPEEQDWGQDAD) has biased composition (acidic residues). The span at 257-271 (EQSLSVQSASESPSP) shows a compositional bias: low complexity. The OCEL domain occupies 275–385 (PDYLLQYSTI…LILEFEEKNR (111 aa)).

It belongs to the ELL/occludin family. In terms of assembly, interacts with AFF4. Component of the super elongation complex (SEC), at least composed of EAF1, EAF2, CDK9, MLLT3/AF9, AFF (AFF1 or AFF4), the P-TEFb complex and ELL (ELL, ELL2 or ELL3). Component of the little elongation complex (LEC), at least composed of ELL (ELL, ELL2 or ELL3), ZC3H8, ICE1 and ICE2.

It localises to the nucleus. Its function is as follows. Enhancer-binding elongation factor that specifically binds enhancers in embryonic stem cells (ES cells), marks them, and is required for their future activation during stem cell specification. Elongation factor component of the super elongation complex (SEC), a complex required to increase the catalytic rate of RNA polymerase II transcription by suppressing transient pausing by the polymerase at multiple sites along the DNA. Component of the little elongation complex (LEC), a complex required to regulate small nuclear RNA (snRNA) gene transcription by RNA polymerase II and III. Does not only bind to enhancer regions of active genes, but also marks the enhancers that are in a poised or inactive state in ES cells and is required for establishing proper RNA polymerase II occupancy at developmentally regulated genes in a cohesin-dependent manner. Probably required for priming developmentally regulated genes for later recruitment of the super elongation complex (SEC), for transcriptional activation during differentiation. Required for recruitment of P-TEFb within SEC during differentiation. Probably preloaded on germ cell chromatin, suggesting that it may prime gene activation by marking enhancers as early as in the germ cells. Promoting epithelial-mesenchymal transition (EMT). The chain is RNA polymerase II elongation factor ELL3 (Ell3) from Rattus norvegicus (Rat).